A 781-amino-acid chain; its full sequence is Death domain-containing protein 1 (781 aa).

ZU5 domains lie at 167-301 and 302-483; these read IMEK…VSCL and KKES…VLHL. Residues 679 to 764 enclose the Death domain; the sequence is DNLLHWLAEE…DLAEELKFKW (86 aa).

The protein is Death domain-containing protein 1 (DTHD1) of Homo sapiens (Human).